The following is a 533-amino-acid chain: Peptide chain release factor 3 (533 aa).

Residues 11–284 (RRRRTFAIIS…ALVGLSPEPL (274 aa)) enclose the tr-type G domain. GTP is bound by residues 20-27 (SHPDAGKT), 92-96 (DTPGH), and 146-149 (NKLD).

The protein belongs to the TRAFAC class translation factor GTPase superfamily. Classic translation factor GTPase family. PrfC subfamily.

The protein localises to the cytoplasm. In terms of biological role, increases the formation of ribosomal termination complexes and stimulates activities of RF-1 and RF-2. It binds guanine nucleotides and has strong preference for UGA stop codons. It may interact directly with the ribosome. The stimulation of RF-1 and RF-2 is significantly reduced by GTP and GDP, but not by GMP. This chain is Peptide chain release factor 3, found in Ralstonia nicotianae (strain ATCC BAA-1114 / GMI1000) (Ralstonia solanacearum).